A 414-amino-acid chain; its full sequence is L-cysteine:1D-myo-inositol 2-amino-2-deoxy-alpha-D-glucopyranoside ligase (414 aa).

Zn(2+) is bound at residue C43. L-cysteinyl-5'-AMP-binding positions include 43–46, T58, and 81–83; these read CGIT and NVT. Residues 45–55 carry the 'HIGH' region motif; the sequence is ITPYDATHLGH. Positions 187 to 192 match the 'ERGGDP' region motif; that stretch reads ERGGDP. W227 lines the L-cysteinyl-5'-AMP pocket. C231 is a binding site for Zn(2+). Residue 249–251 participates in L-cysteinyl-5'-AMP binding; it reads GSD. H256 is a binding site for Zn(2+). I283 is an L-cysteinyl-5'-AMP binding site. Residues 289–293 carry the 'KMSKS' region motif; it reads KMSKS.

Belongs to the class-I aminoacyl-tRNA synthetase family. MshC subfamily. As to quaternary structure, monomer. Zn(2+) is required as a cofactor.

The catalysed reaction is 1D-myo-inositol 2-amino-2-deoxy-alpha-D-glucopyranoside + L-cysteine + ATP = 1D-myo-inositol 2-(L-cysteinylamino)-2-deoxy-alpha-D-glucopyranoside + AMP + diphosphate + H(+). Functionally, catalyzes the ATP-dependent condensation of GlcN-Ins and L-cysteine to form L-Cys-GlcN-Ins. The protein is L-cysteine:1D-myo-inositol 2-amino-2-deoxy-alpha-D-glucopyranoside ligase of Tsukamurella paurometabola (strain ATCC 8368 / DSM 20162 / CCUG 35730 / CIP 100753 / JCM 10117 / KCTC 9821 / NBRC 16120 / NCIMB 702349 / NCTC 13040) (Corynebacterium paurometabolum).